A 237-amino-acid chain; its full sequence is Putative N-acetylmannosamine-6-phosphate 2-epimerase (237 aa).

The protein belongs to the NanE family.

It catalyses the reaction an N-acyl-D-glucosamine 6-phosphate = an N-acyl-D-mannosamine 6-phosphate. It participates in amino-sugar metabolism; N-acetylneuraminate degradation; D-fructose 6-phosphate from N-acetylneuraminate: step 3/5. Its function is as follows. Converts N-acetylmannosamine-6-phosphate (ManNAc-6-P) to N-acetylglucosamine-6-phosphate (GlcNAc-6-P). The polypeptide is Putative N-acetylmannosamine-6-phosphate 2-epimerase (Listeria monocytogenes serotype 4a (strain HCC23)).